The primary structure comprises 89 residues: Cell division topological specificity factor (89 aa).

This sequence belongs to the MinE family.

Prevents the cell division inhibition by proteins MinC and MinD at internal division sites while permitting inhibition at polar sites. This ensures cell division at the proper site by restricting the formation of a division septum at the midpoint of the long axis of the cell. The chain is Cell division topological specificity factor from Serratia proteamaculans (strain 568).